The following is a 203-amino-acid chain: Calcineurin B-like protein 5 (203 aa).

Gly-2 carries the N-myristoyl glycine lipid modification. 4 consecutive EF-hand domains span residues 30–65, 66–101, 103–138, and 147–182; these read EVEVLHGLFIKLTSCLSNDNLLTKEKFQFILIKNTK, KRSLSAERIFGLFDMRNDGAIDFGEFVHTLNIFHPN, SPRDKAIFAFRLYDTRETGFIEPEEVKEMIIDVLEE, and IIDSIVSKTFEEADWKKDGIIDLEEWENFVATYPLT.

The protein belongs to the calcineurin regulatory subunit family. Homodimer. Interacts with PP2CA, CIPK2, CIPK11, CIPK23 and CIPK24. In terms of processing, both N-myristoylation and calcium-mediated conformational changes are essential for its function. Expressed in green tissues, but not in the roots.

It localises to the cytoplasm. The protein localises to the nucleus. Functionally, acts as a calcium sensor. CBL proteins interact with CIPK serine-threonine protein kinases. Binding of a CBL protein to the regulatory NAF domain of a CIPK protein lead to the activation of the kinase in a calcium-dependent manner. May function as a positive regulator of salt or drought responses. This chain is Calcineurin B-like protein 5 (CBL5), found in Arabidopsis thaliana (Mouse-ear cress).